The sequence spans 93 residues: Putative defensin-like protein 283 (93 aa).

A signal peptide spans 1 to 24 (MTKIGFYLATYATIYIILSPGLLA). 3 disulfide bridges follow: C43–C83, C66–C90, and C72–C92.

The protein belongs to the DEFL family.

The protein localises to the secreted. The chain is Putative defensin-like protein 283 from Arabidopsis thaliana (Mouse-ear cress).